Reading from the N-terminus, the 180-residue chain is Zinc finger protein 740 (180 aa).

The span at 1-11 (MMLSQIASKQA) shows a compositional bias: polar residues. The tract at residues 1–62 (MMLSQIASKQ…KEDDSLAEAS (62 aa)) is disordered. A Glycyl lysine isopeptide (Lys-Gly) (interchain with G-Cter in SUMO2) cross-link involves residue Lys-9. Ser-19 is subject to Phosphoserine. Basic and acidic residues predominate over residues 31 to 56 (CKPRFDLSSKGHRKDSDKSRNRKEDD). 2 consecutive C2H2-type zinc fingers follow at residues 88 to 110 (FICEHCFGAFRSSYHLKRHVLIH) and 116 to 138 (FECDVCDMRFIQKYHLERHKRVH). Residues 144–166 (YQCERCHQCFSRTDRLLRHKRMC) form a C2H2-type 3; atypical zinc finger.

The protein belongs to the krueppel C2H2-type zinc-finger protein family.

The protein localises to the nucleus. In terms of biological role, may be involved in transcriptional regulation. The protein is Zinc finger protein 740 (Znf740) of Mus musculus (Mouse).